Here is a 90-residue protein sequence, read N- to C-terminus: Elongation factor 1-beta (90 aa).

The protein belongs to the EF-1-beta/EF-1-delta family.

Its function is as follows. Promotes the exchange of GDP for GTP in EF-1-alpha/GDP, thus allowing the regeneration of EF-1-alpha/GTP that could then be used to form the ternary complex EF-1-alpha/GTP/AAtRNA. In Aeropyrum pernix (strain ATCC 700893 / DSM 11879 / JCM 9820 / NBRC 100138 / K1), this protein is Elongation factor 1-beta (ef1b).